Here is an 802-residue protein sequence, read N- to C-terminus: DSC E3 ubiquitin ligase complex subunit A (802 aa).

The N-terminal stretch at 1-22 is a signal peptide; that stretch reads MDNRGSFFFLLIVFYLLLSSQS. The Lumenal segment spans residues 23-381; sequence RPPLLDQDRE…TGPKIEEYDK (359 aa). N-linked (GlcNAc...) asparagine glycans are attached at residues Asn-48, Asn-71, Asn-115, Asn-126, Asn-148, and Asn-166. Residues 382–402 traverse the membrane as a helical segment; it reads YSARLVFIICGVFAAQITLLL. Residues 403–429 are Cytoplasmic-facing; that stretch reads RQIKEASTPSTRSRISFYTIALMAFGD. Residues 430–450 form a helical membrane-spanning segment; it reads AFVLIFILLELYPAVSFLVMA. The Lumenal portion of the chain corresponds to 451 to 453; sequence TAA. A helical transmembrane segment spans residues 454 to 474; sequence FLTFLSVSYIGMKFMMEIWAV. Over 475 to 550 the chain is Cytoplasmic; it reads QAPERREQER…QETRNDVGAM (76 aa). Residues 478–541 form a disordered region; that stretch reads ERREQERRSN…TNRGTTSAAQ (64 aa). Residues 532–541 show a composition bias toward polar residues; that stretch reads TNRGTTSAAQ. A helical transmembrane segment spans residues 551–571; it reads YARFYFVLFVMLIISIWSFLW. Over 572-574 the chain is Lumenal; it reads PNR. Residues 575–595 form a helical membrane-spanning segment; the sequence is LGALYARALAFVYLSFWTPQI. Over 596–608 the chain is Cytoplasmic; it reads GRNIIRNCRKALR. The chain crosses the membrane as a helical span at residues 609–629; the sequence is WDFVIGQSILRLFPFVYFLTV. Over 630 to 642 the chain is Lumenal; it reads RGNVLFIHPDTTT. The chain crosses the membrane as a helical span at residues 643–663; sequence AFALAGWVWIQVWVLASQDIL. Over 664 to 802 the chain is Cytoplasmic; that stretch reads GPRFFVPRGW…PICRESIPPV (139 aa). Residues 732-796 form an RING-type; atypical zinc finger; it reads CAICMQEIEV…RLRLQCPICR (65 aa).

In terms of assembly, component of the DSC E3 ubiquitin ligase complex composed of dscA, dscB, dscC and dscD.

It localises to the endoplasmic reticulum membrane. It catalyses the reaction S-ubiquitinyl-[E2 ubiquitin-conjugating enzyme]-L-cysteine + [acceptor protein]-L-lysine = [E2 ubiquitin-conjugating enzyme]-L-cysteine + N(6)-ubiquitinyl-[acceptor protein]-L-lysine.. It participates in protein modification; protein ubiquitination. In terms of biological role, catalytic component of the DSC E3 ubiquitin ligase complex which is required for the srbA transcriptional activator proteolytic cleavage to release the soluble transcription factor from the membrane in low oxygen or sterol conditions. Required for growth during hypoxia and triazole drug susceptibility, as well as for virulence in a murine model of invasive pulmonary aspergillosis (IPA). The polypeptide is DSC E3 ubiquitin ligase complex subunit A (Aspergillus fumigatus (strain CBS 144.89 / FGSC A1163 / CEA10) (Neosartorya fumigata)).